Here is a 620-residue protein sequence, read N- to C-terminus: Probable potassium transport system protein Kup 1 (620 aa).

12 consecutive transmembrane segments (helical) span residues Leu-10 to Leu-30, Val-50 to Ile-70, Met-102 to Ile-122, Leu-138 to Lys-158, Phe-168 to Val-188, Met-211 to Tyr-231, Trp-246 to Leu-266, Met-284 to Ile-304, Ile-336 to Phe-356, Ile-368 to Met-388, Trp-393 to Ala-413, and Ile-415 to Val-435.

The protein belongs to the HAK/KUP transporter (TC 2.A.72) family.

It is found in the cell inner membrane. The enzyme catalyses K(+)(in) + H(+)(in) = K(+)(out) + H(+)(out). Functionally, transport of potassium into the cell. Likely operates as a K(+):H(+) symporter. The chain is Probable potassium transport system protein Kup 1 from Rhodopseudomonas palustris (strain BisB18).